The following is a 334-amino-acid chain: WD repeat-containing protein 54 (334 aa).

WD repeat units lie at residues 116–155, 162–206, and 250–289; these read SSVQ…PNIV, GHQT…TLLT, and AHAR…ESGS.

In terms of assembly, homodimer and homotrimer; forms tight forms of dimers and trimers. Interacts with IZUMO1 and IZUMO1R/JUNO. In terms of processing, cross-linked to tightly form both dimers and trimers by TGM2. Cross-linking enhances the activation of EGF receptor-mediated signaling pathway. Cross-linking is inhibited by EGF. Ubiquitinated. EGF increases ubiquitination.

The protein resides in the vesicle. It is found in the cytoplasm. The protein localises to the cell membrane. Functionally, plays a role in the adhesion and fusion of the sperm-oocyte membrane through its interactions with IZUMO1 and IZUMO1R/JUNO. When cross-linked to form dimers and trimers, it has a regulatory effect on ERK signaling pathway activity in response to EGF stimulation. Colocalizes with the EGF receptor in WDR54-specific vesicle where it sustains the internalization and controls the degradation of the EGF receptor after EGF stimulation. The polypeptide is WD repeat-containing protein 54 (Mus musculus (Mouse)).